The chain runs to 109 residues: Cortistatin (109 aa).

The signal sequence occupies residues 1–25 (MMGGRGTGGKWPSAFGLLLLWGVAA). Positions 26–93 (SALPLESGPT…PPPQQPPHLD (68 aa)) are excised as a propeptide. The disordered stretch occupies residues 64–97 (ASSSTPVGGGTPGLSKSQERPPPQQPPHLDKKPC). Residues Cys97 and Cys108 are joined by a disulfide bond.

The protein belongs to the somatostatin family. In terms of tissue distribution, expressed in a subset of GABAergic cells in the cortex and hippocampus.

The protein resides in the secreted. This Mus musculus (Mouse) protein is Cortistatin (Cort).